A 463-amino-acid chain; its full sequence is MHHPVAPVIDTVVNLAKRRGFVYPSGEIYGGTKSAWDYGPLGVELKENIKRQWWRSVVTGRDDVVGIDSSIILPREVWVASGHVDVFHDPLVESLITHKRYRADHLIEAYEAKHGHPPPNGLADIRDPETGEPGQWTQPREFNMMLKTYLGPIETEEGLHYLRPETAQGIFVNFANVVTTARKKPPFGIGQIGKSFRNEITPGNFIFRTREFEQMEMEFFVEPATAKEWHQYWIDNRLQWYIDLGIRRENLRLWEHPKDKLSHYSDRTVDIEYKFGFMGNPWGELEGVANRTDFDLSTHARHSGVDLSFYDQINDVRYTPYVIEPAAGLTRSFMAFLIDAYTEDEAPNTKGGMDKRTVLRLDPRLAPVKAAVLPLSRHADLSPKARDLGAELRKCWNIDFDDAGAIGRRYRRQDEVGTPFCVTVDFDSLQDNAVTVRERDAMTQDRVAMSSVADYLAVRLKGS.

The substrate site is built by Arg102 and Glu165. ATP-binding positions include 197-199, 207-212, 284-285, and 328-331; these read RNE, FRTREF, EL, and GLTR. 212 to 216 contacts substrate; sequence FEQME. Residue 324–328 participates in substrate binding; that stretch reads EPAAG.

Belongs to the class-II aminoacyl-tRNA synthetase family. Homodimer.

It localises to the cytoplasm. The catalysed reaction is tRNA(Gly) + glycine + ATP = glycyl-tRNA(Gly) + AMP + diphosphate. Its function is as follows. Catalyzes the attachment of glycine to tRNA(Gly). The protein is Glycine--tRNA ligase of Mycobacterium bovis (strain ATCC BAA-935 / AF2122/97).